Here is a 408-residue protein sequence, read N- to C-terminus: Repulsive guidance molecule B homolog drag-1 (408 aa).

A signal peptide spans 1–22; the sequence is MSIVYLVSITFIFSVFKPITSC. The Extracellular portion of the chain corresponds to 23-387; that stretch reads RVEECAAWFQ…SEIFKKCIPS (365 aa). 4 N-linked (GlcNAc...) asparagine glycosylation sites follow: Asn-60, Asn-134, Asn-183, and Asn-376. Residues 388–408 form a helical membrane-spanning segment; sequence KSIRFYPFLAIFFFALLSLLC.

The protein belongs to the repulsive guidance molecule (RGM) family. In terms of assembly, interacts with unc-40 (via FN6 domain), dbl-1 and sma-6. Expressed in pharyngeal, hypodermal and intestinal cells.

It is found in the cell membrane. Its function is as follows. Probably in association with the cell surface receptor unc-40, positively modulates the BMP-like Sma/Mab signaling pathway through interaction with both the ligand dbl-1 and its type I receptor sma-6. Regulates body size and this may be through modulation of the Sma/Mab signaling pathway. In Caenorhabditis elegans, this protein is Repulsive guidance molecule B homolog drag-1.